The primary structure comprises 940 residues: Gamma-aminobutyric acid type B receptor subunit 2 (940 aa).

Positions 1-40 (MASPPSSGQPRPPPPPPPPARLLLPLLLSLLLWLAPGAWG) are cleaved as a signal peptide. The Extracellular portion of the chain corresponds to 41–482 (WTRGAPRPPP…LRKISLPLYS (442 aa)). A glycan (N-linked (GlcNAc...) asparagine) is linked at N89. 3 disulfides stabilise this stretch: C107/C134, C236/C265, and C264/C301. Residues N297, N388, N403, and N452 are each glycosylated (N-linked (GlcNAc...) asparagine). A helical membrane pass occupies residues 483-503 (ILSALTILGMIMASAFLFFNI). Residues 504-521 (KNRNQKLIKMSSPYMNNL) lie on the Cytoplasmic side of the membrane. A helical transmembrane segment spans residues 522–542 (IILGGMLSYASIFLFGLDGSF). The Extracellular segment spans residues 543–550 (VSEKTFET). A helical membrane pass occupies residues 551 to 571 (LCTVRTWILTVGYTTAFGAMF). Over 572 to 596 (AKTWRVHAIFKNVKMKKKIIKDQKL) the chain is Cytoplasmic. Residues 597–617 (LVIVGGMLLIDLCILICWQAV) traverse the membrane as a helical segment. The Extracellular portion of the chain corresponds to 618–653 (DPLRRTVERYSMEPDPAGRDISIRPLLEHCENTHMT). The chain crosses the membrane as a helical span at residues 654 to 674 (IWLGIVYAYKGLLMLFGCFLA). At 675 to 690 (WETRNVSIPALNDSKY) the chain is on the cytoplasmic side. The chain crosses the membrane as a helical span at residues 691–711 (IGMSVYNVGIMCIIGAAVSFL). Residues 712–719 (TRDQPNVQ) are Extracellular-facing. The helical transmembrane segment at 720 to 740 (FCIVALVIIFCSTITLCLVFV) threads the bilayer. At 741–940 (PKLITLRTNP…PSFRVMVSGL (200 aa)) the chain is on the cytoplasmic side. The disordered stretch occupies residues 762–789 (TQNQKKEDSKTSTSVTSVNQASTSRLEG). Positions 772 to 786 (TSTSVTSVNQASTSR) are enriched in polar residues. Phosphoserine occurs at positions 775 and 778. Positions 780-818 (NQASTSRLEGLQSENHRLRMKITELDKDLEEVTMQLQDT) form a coiled coil. A Phosphothreonine modification is found at T818. Residues S883, S892, S912, S915, S919, and S923 each carry the phosphoserine modification.

It belongs to the G-protein coupled receptor 3 family. GABA-B receptor subfamily. As to quaternary structure, heterodimer of GABBR1 and GABBR2. Homodimers may form, but are inactive. Interacts (via C-terminus) with ATF4 (via leucine zipper domain). Interacts with KCTD8, KCTD12 and KCTD16; this interaction determines the pharmacology and kinetics of the receptor response, the KCTD proteins markedly accelerating the GABA-B response, although to different extents. As to expression, highly expressed in areas of the brain including thalamic nuclei, the hippocampus, cerebellar Purkinje cells and the medial habenula, and moderately expressed in the cerebral cortex, certain anterioventral thalamic nuclei, dorsal medial hypothalamic nucleus and suprachiasmatic nuclei. Also weakly expressed in the testis.

Its subcellular location is the cell membrane. The protein resides in the postsynaptic cell membrane. It localises to the perikaryon. It is found in the cell projection. The protein localises to the dendrite. Component of a heterodimeric G-protein coupled receptor for GABA, formed by GABBR1 and GABBR2. Within the heterodimeric GABA receptor, only GABBR1 seems to bind agonists, while GABBR2 mediates coupling to G proteins. Ligand binding causes a conformation change that triggers signaling via guanine nucleotide-binding proteins (G proteins) and modulates the activity of down-stream effectors, such as adenylate cyclase. Signaling inhibits adenylate cyclase, stimulates phospholipase A2, activates potassium channels, inactivates voltage-dependent calcium-channels and modulates inositol phospholipid hydrolysis. Plays a critical role in the fine-tuning of inhibitory synaptic transmission. Pre-synaptic GABA receptor inhibits neurotransmitter release by down-regulating high-voltage activated calcium channels, whereas postsynaptic GABA receptor decreases neuronal excitability by activating a prominent inwardly rectifying potassium (Kir) conductance that underlies the late inhibitory postsynaptic potentials. Not only implicated in synaptic inhibition but also in hippocampal long-term potentiation, slow wave sleep, muscle relaxation and antinociception. The protein is Gamma-aminobutyric acid type B receptor subunit 2 (Gabbr2) of Rattus norvegicus (Rat).